We begin with the raw amino-acid sequence, 358 residues long: Myb family transcription factor APL (358 aa).

The 61-residue stretch at 31-91 folds into the HTH myb-type domain; the sequence is TDPKPRLRWT…HLQKFRLGKQ (61 aa). The H-T-H motif DNA-binding region spans 62-87; the sequence is PKTIMRVMGVKGLTLYHLKSHLQKFR. Residues 125 to 145 are a coiled coil; it reads RNMNEMQMEVQRRLHEQLEVQ. An LHEQLE motif is present at residues 138-143; the sequence is LHEQLE. Residues 313–358 are disordered; that stretch reads RKSGLSGDEGNNGGKLLERPSPRRSPLSPMMNPNGGLIQGRNSPFG.

The protein belongs to the MYB-CC family. As to expression, expressed in shoots and roots, specifically in the developing protophloem sieve elements. Detected in phloem and/or cambium. Expressed in the phloem tissues of various organs, including leaves and cotyledons, during vegetative growth.

The protein resides in the nucleus. Functionally, transcription factor required for phloem identity. Has a dual role both in promoting phloem differentiation and in repressing xylem differentiation during vascular development. Regulates the expression of the transcription factor NAC045 (AC A4VCM0). May activate the transcription of specific genes involved in phosphate uptake or assimilation. Promotes flowering through transcriptional activation of both FT and its transport machinery component, FTIP1. This is Myb family transcription factor APL from Arabidopsis thaliana (Mouse-ear cress).